The sequence spans 214 residues: Transcriptional regulatory protein ComA (214 aa).

A Response regulatory domain is found at 3 to 121 (KILVIDDHPA…KITQYIYHVL (119 aa)). Aspartate 55 carries the post-translational modification 4-aspartylphosphate. The HTH luxR-type domain occupies 147 to 212 (SQKEQDVLTP…EAVLIAKSDG (66 aa)). Residues 171-190 (NQEIADALHLSKRSIEYSLT) constitute a DNA-binding region (H-T-H motif).

Post-translationally, phosphorylated by ComP.

It is found in the cytoplasm. In terms of biological role, response regulator in the two-component regulatory system ComP/ComA involved in a major quorum response pathway that regulates the development of genetic competence. Regulates directly the expression of over 20 genes, including genes of the srfA operon, degQ, rapA, rapC, rapE, rapF, etc. Regulates indirectly, through the regulation of comK transcription, the expression of late competence genes. This Bacillus subtilis (strain 168) protein is Transcriptional regulatory protein ComA (comA).